The sequence spans 777 residues: Santalene and bergamotene synthase, chloroplastic (777 aa).

Residues 1–36 (MIVGYRSTIITLSHPKLGNGKTISSNAIFQRSCRVR) constitute a chloroplast transit peptide. Mg(2+)-binding residues include aspartate 530 and aspartate 534. Positions 530–534 (DDQFD) match the DDXXD motif motif.

This sequence belongs to the terpene synthase family. Tpse subfamily. The cofactor is Mg(2+). Mn(2+) is required as a cofactor.

The protein localises to the plastid. Its subcellular location is the chloroplast. The catalysed reaction is (2Z,6Z)-farnesyl diphosphate = (+)-alpha-santalene + diphosphate. It carries out the reaction (2Z,6Z)-farnesyl diphosphate = (+)-endo-beta-bergamotene + diphosphate. It catalyses the reaction (2Z,6Z)-farnesyl diphosphate = (1S,5S,6S)-alpha-bergamotene + diphosphate. Functionally, (2Z,6Z)-farnesyl diphosphate cyclizing enzyme. Produces (+)-alpha-santalene, (+)-endo-beta-bergamotene, (-)-endo-alpha-bergamotene, and at lower amounts, (-)exo-alpha-bergamotene and (+)-epi-beta-santalene. Not able to use geranyl diphosphate, E,E-farnesyl diphosphate or E,E,E-geranylgeranyl diphosphate as substrates, but able to use Neryl diphosphate to make the monoterpene terpineol. The sequence is that of Santalene and bergamotene synthase, chloroplastic (SBS) from Solanum habrochaites (Wild tomato).